We begin with the raw amino-acid sequence, 160 residues long: Transcriptional repressor NrdR (160 aa).

Polar residues predominate over residues 1 to 11 (MRCPSCNSLDT). Residues 1 to 20 (MRCPSCNSLDTQVKDSRPTE) form a disordered region. A zinc finger lies at 3-34 (CPSCNSLDTQVKDSRPTEDSAVIRRRRVCMAC). The ATP-cone domain occupies 49–139 (LTVIKRNGRR…VYRNFREAKD (91 aa)).

Belongs to the NrdR family. Zn(2+) is required as a cofactor.

Functionally, negatively regulates transcription of bacterial ribonucleotide reductase nrd genes and operons by binding to NrdR-boxes. This chain is Transcriptional repressor NrdR, found in Nitrobacter hamburgensis (strain DSM 10229 / NCIMB 13809 / X14).